Consider the following 1059-residue polypeptide: Carbamoyl phosphate synthase large chain (1059 aa).

Positions 1-401 (MPKRKDIQKI…SLLKACRSLE (401 aa)) are carboxyphosphate synthetic domain. ATP contacts are provided by Arg-129, Arg-169, Gly-175, Gly-176, Arg-208, Ile-210, Glu-215, Gly-241, Ile-242, His-243, Gln-284, and Glu-298. Residues 133 to 327 (KQLMEELGQP…IAKLAAKIAV (195 aa)) form the ATP-grasp 1 domain. Mg(2+) contacts are provided by Gln-284, Glu-298, and Asn-300. Mn(2+) contacts are provided by Gln-284, Glu-298, and Asn-300. Positions 402–546 (VCVDHNELPA…YSTYGFENES (145 aa)) are oligomerization domain. The interval 547–929 (VKSSKESVLV…ALYKAFEASY (383 aa)) is carbamoyl phosphate synthetic domain. Positions 671 to 861 (EQALKELDIP…MAQVATRLIL (191 aa)) constitute an ATP-grasp 2 domain. Residues Arg-707, Ser-746, Ile-748, Glu-752, Gly-777, Val-778, His-779, Ser-780, Gln-820, and Glu-832 each coordinate ATP. Mg(2+) contacts are provided by Gln-820, Glu-832, and Asn-834. The Mn(2+) site is built by Gln-820, Glu-832, and Asn-834. One can recognise an MGS-like domain in the interval 930–1059 (LHLPNFGNIV…ESRSFTTEAI (130 aa)). An allosteric domain region spans residues 930 to 1059 (LHLPNFGNIV…ESRSFTTEAI (130 aa)).

Belongs to the CarB family. As to quaternary structure, composed of two chains; the small (or glutamine) chain promotes the hydrolysis of glutamine to ammonia, which is used by the large (or ammonia) chain to synthesize carbamoyl phosphate. Tetramer of heterodimers (alpha,beta)4. Requires Mg(2+) as cofactor. It depends on Mn(2+) as a cofactor.

The enzyme catalyses hydrogencarbonate + L-glutamine + 2 ATP + H2O = carbamoyl phosphate + L-glutamate + 2 ADP + phosphate + 2 H(+). It catalyses the reaction hydrogencarbonate + NH4(+) + 2 ATP = carbamoyl phosphate + 2 ADP + phosphate + 2 H(+). It participates in amino-acid biosynthesis; L-arginine biosynthesis; carbamoyl phosphate from bicarbonate: step 1/1. It functions in the pathway pyrimidine metabolism; UMP biosynthesis via de novo pathway; (S)-dihydroorotate from bicarbonate: step 1/3. Functionally, large subunit of the glutamine-dependent carbamoyl phosphate synthetase (CPSase). CPSase catalyzes the formation of carbamoyl phosphate from the ammonia moiety of glutamine, carbonate, and phosphate donated by ATP, constituting the first step of 2 biosynthetic pathways, one leading to arginine and/or urea and the other to pyrimidine nucleotides. The large subunit (synthetase) binds the substrates ammonia (free or transferred from glutamine from the small subunit), hydrogencarbonate and ATP and carries out an ATP-coupled ligase reaction, activating hydrogencarbonate by forming carboxy phosphate which reacts with ammonia to form carbamoyl phosphate. The polypeptide is Carbamoyl phosphate synthase large chain (Streptococcus sanguinis (strain SK36)).